A 137-amino-acid chain; its full sequence is ER-derived vesicles protein erv14 (137 aa).

Residues 1–9 lie on the Cytoplasmic side of the membrane; sequence MMSFGSFVY. Residues 10–30 form a helical membrane-spanning segment; the sequence is IACLLLNGANMLLQIFCVIMF. At 31–62 the chain is on the extracellular side; the sequence is SDLEMDYINPIDLCNKLNDLVMPEIISHTLVT. A helical membrane pass occupies residues 63-83; the sequence is LLLLLGKKWLLFLANLPLLVF. The Cytoplasmic portion of the chain corresponds to 84 to 114; sequence HANQVIHKTHILDATEIFRQLGRHKRDNFIK. A helical membrane pass occupies residues 115-135; that stretch reads VTFYLIMFFTLLYCMVMSLIQ. Over 136 to 137 the chain is Extracellular; it reads EE.

Belongs to the cornichon family.

It is found in the endoplasmic reticulum. The protein localises to the membrane. It localises to the golgi apparatus membrane. Its function is as follows. Regulates export of the secretory proteins from the endoplasmic reticulum in COPII-coated vesicles. The polypeptide is ER-derived vesicles protein erv14 (erv14) (Schizosaccharomyces pombe (strain 972 / ATCC 24843) (Fission yeast)).